A 433-amino-acid polypeptide reads, in one-letter code: MANILIQGATVLTMEGPDGVYRDGEIAIAGNSILSVGPRGSVPEGFRPGRSIDGTGMVAMPGFVNCHTHAAMTLLRSYADDMPLMKWLSEKIWPVEERLQPEDIYWGTMLCCLEMIKSGTTTFADMYFSMERVAAAVEESGMRACLSRGMIGVGSGARKAIDESLSFVREWNGGADGRITAMFGPHAPYTCPPEYLKKVVDLAAREGAGIHIHVAETRDEIEQIRAGYGTTPVRYLDAAGVFELPVLAAHCVHLDEGDIEILSAKRVGIAHCPESNMKLASGIAPVTELLQAGAAVGLGTDGAASNNNLDMLEEMRSASLLHKVSTGDPLALPSFEALRMATAGGALALGLKDVGLLKPGMKADLILVDFRRPHLCPQHDLIAHLVYAAQSADVDTVIINGKVVMEKRQVLNLDEEKIMAEAQKRALRLVNRE.

Zn(2+)-binding residues include H67 and H69. The substrate site is built by E96, R148, R158, and H186. H213 lines the Zn(2+) pocket. Residues E216 and D301 each coordinate substrate. Residue D301 participates in Zn(2+) binding.

Belongs to the metallo-dependent hydrolases superfamily. MTA/SAH deaminase family. It depends on Zn(2+) as a cofactor.

It catalyses the reaction S-adenosyl-L-homocysteine + H2O + H(+) = S-inosyl-L-homocysteine + NH4(+). The catalysed reaction is S-methyl-5'-thioadenosine + H2O + H(+) = S-methyl-5'-thioinosine + NH4(+). Functionally, catalyzes the deamination of 5-methylthioadenosine and S-adenosyl-L-homocysteine into 5-methylthioinosine and S-inosyl-L-homocysteine, respectively. Is also able to deaminate adenosine. The polypeptide is 5-methylthioadenosine/S-adenosylhomocysteine deaminase (Pelotomaculum thermopropionicum (strain DSM 13744 / JCM 10971 / SI)).